Consider the following 460-residue polypeptide: Bifunctional protein GlmU (460 aa).

The tract at residues 1 to 229 (MTNYAIILAA…FNESLGVNDR (229 aa)) is pyrophosphorylase. UDP-N-acetyl-alpha-D-glucosamine-binding positions include 8-11 (LAAG), lysine 22, glutamine 72, and 77-78 (GT). Aspartate 102 is a Mg(2+) binding site. Positions 139, 154, 169, and 227 each coordinate UDP-N-acetyl-alpha-D-glucosamine. A Mg(2+)-binding site is contributed by asparagine 227. The interval 230 to 250 (VALAIAETVMRQRITQKHMVN) is linker. Residues 251–460 (GVTFQNPETV…RLAHHPSRSK (210 aa)) are N-acetyltransferase. The UDP-N-acetyl-alpha-D-glucosamine site is built by arginine 332 and lysine 350. Histidine 362 acts as the Proton acceptor in catalysis. UDP-N-acetyl-alpha-D-glucosamine is bound by residues tyrosine 365 and asparagine 376. Acetyl-CoA contacts are provided by residues alanine 379, 385–386 (NY), serine 404, alanine 422, and arginine 439.

It in the N-terminal section; belongs to the N-acetylglucosamine-1-phosphate uridyltransferase family. The protein in the C-terminal section; belongs to the transferase hexapeptide repeat family. As to quaternary structure, homotrimer. Requires Mg(2+) as cofactor.

It is found in the cytoplasm. It carries out the reaction alpha-D-glucosamine 1-phosphate + acetyl-CoA = N-acetyl-alpha-D-glucosamine 1-phosphate + CoA + H(+). It catalyses the reaction N-acetyl-alpha-D-glucosamine 1-phosphate + UTP + H(+) = UDP-N-acetyl-alpha-D-glucosamine + diphosphate. It functions in the pathway nucleotide-sugar biosynthesis; UDP-N-acetyl-alpha-D-glucosamine biosynthesis; N-acetyl-alpha-D-glucosamine 1-phosphate from alpha-D-glucosamine 6-phosphate (route II): step 2/2. It participates in nucleotide-sugar biosynthesis; UDP-N-acetyl-alpha-D-glucosamine biosynthesis; UDP-N-acetyl-alpha-D-glucosamine from N-acetyl-alpha-D-glucosamine 1-phosphate: step 1/1. Its pathway is bacterial outer membrane biogenesis; LPS lipid A biosynthesis. In terms of biological role, catalyzes the last two sequential reactions in the de novo biosynthetic pathway for UDP-N-acetylglucosamine (UDP-GlcNAc). The C-terminal domain catalyzes the transfer of acetyl group from acetyl coenzyme A to glucosamine-1-phosphate (GlcN-1-P) to produce N-acetylglucosamine-1-phosphate (GlcNAc-1-P), which is converted into UDP-GlcNAc by the transfer of uridine 5-monophosphate (from uridine 5-triphosphate), a reaction catalyzed by the N-terminal domain. The protein is Bifunctional protein GlmU of Streptococcus pyogenes serotype M1.